A 279-amino-acid polypeptide reads, in one-letter code: Large ribosomal subunit protein uL2 (279 aa).

2 disordered regions span residues 31–61 (KSLL…HKRH) and 222–279 (GMAM…RNAK). Over residues 49 to 61 (KTSRHRGGGHKRH) the composition is skewed to basic residues. Gly residues predominate over residues 232 to 242 (MGGGEGKSKSG). Positions 259–268 (LKTRNRKKAS) are enriched in basic residues.

Belongs to the universal ribosomal protein uL2 family. As to quaternary structure, part of the 50S ribosomal subunit. Forms a bridge to the 30S subunit in the 70S ribosome.

Its function is as follows. One of the primary rRNA binding proteins. Required for association of the 30S and 50S subunits to form the 70S ribosome, for tRNA binding and peptide bond formation. It has been suggested to have peptidyltransferase activity; this is somewhat controversial. Makes several contacts with the 16S rRNA in the 70S ribosome. In Chlorobium chlorochromatii (strain CaD3), this protein is Large ribosomal subunit protein uL2.